A 340-amino-acid polypeptide reads, in one-letter code: Fructose-1,6-bisphosphatase class 1 (340 aa).

Mg(2+) is bound by residues glutamate 107, aspartate 126, leucine 128, and aspartate 129. Residue asparagine 215 coordinates substrate. Glutamate 287 is a binding site for Mg(2+).

It belongs to the FBPase class 1 family. In terms of assembly, homotetramer. Mg(2+) is required as a cofactor.

The protein localises to the cytoplasm. It carries out the reaction beta-D-fructose 1,6-bisphosphate + H2O = beta-D-fructose 6-phosphate + phosphate. The protein operates within carbohydrate biosynthesis; gluconeogenesis. The polypeptide is Fructose-1,6-bisphosphatase class 1 (Brucella ovis (strain ATCC 25840 / 63/290 / NCTC 10512)).